Reading from the N-terminus, the 323-residue chain is L-lactate dehydrogenase (323 aa).

Positions 11, 32, and 63 each coordinate NAD(+). Substrate contacts are provided by Gln80 and Arg86. Residues Ser99, 116–118 (VSN), and Ser141 each bind NAD(+). A substrate-binding site is contributed by 118–121 (NPVD). A substrate-binding site is contributed by 146 to 149 (DTAR). Positions 151 and 166 each coordinate beta-D-fructose 1,6-bisphosphate. The active-site Proton acceptor is the His173. Tyr221 carries the post-translational modification Phosphotyrosine. A substrate-binding site is contributed by Thr230.

This sequence belongs to the LDH/MDH superfamily. LDH family. In terms of assembly, homotetramer.

Its subcellular location is the cytoplasm. It carries out the reaction (S)-lactate + NAD(+) = pyruvate + NADH + H(+). It participates in fermentation; pyruvate fermentation to lactate; (S)-lactate from pyruvate: step 1/1. Allosterically activated by fructose 1,6-bisphosphate (FBP). Catalyzes the conversion of lactate to pyruvate. The protein is L-lactate dehydrogenase of Kosmotoga olearia (strain ATCC BAA-1733 / DSM 21960 / TBF 19.5.1).